Consider the following 348-residue polypeptide: Ileal sodium/bile acid cotransporter (348 aa).

Residues 1–28 (MNDPNSCVDNATVCSGASCVVPESNFNN) lie on the Extracellular side of the membrane. N10 carries an N-linked (GlcNAc...) asparagine glycan. Residues 29–49 (ILSVVLSTVLTILLALVMFSM) form a helical membrane-spanning segment. Residues 50-82 (GCNVEIKKFLGHIKRPWGICVGFLCQFGIMPLT) are Cytoplasmic-facing. The chain crosses the membrane as a helical span at residues 83 to 103 (GFILSVAFDILPLQAVVVLII). The Extracellular portion of the chain corresponds to 104 to 126 (GCCPGGTASNILAYWVDGDMDLS). Residues 127–147 (VSMTTCSTLLALGMMPLCLLI) traverse the membrane as a helical segment. The Cytoplasmic segment spans residues 148–157 (YTKMWVDSGS). A helical transmembrane segment spans residues 158 to 178 (IVIPYDNIGTSLVSLVVPVSI). At 179 to 195 (GMFVNHKWPQKAKIILK) the chain is on the extracellular side. The helical transmembrane segment at 196-216 (IGSIAGAILIVLIAVVGGILY) threads the bilayer. Topologically, residues 217–224 (QSAWIIAP) are cytoplasmic. A helical transmembrane segment spans residues 225–245 (KLWIIGTIFPVAGYSLGFLLA). Over 246–284 (RIAGLPWYRCRTVAFETGMQNTQLCSTIVQLSFTPEELN) the chain is Extracellular. Residues 285–305 (VVFTFPLIYSIFQLAFAAIFL) traverse the membrane as a helical segment. Residues 306–348 (GFYVAYKKCHGKNKAEIPESKENGTEPESSFYKANGGFQPDEK) lie on the Cytoplasmic side of the membrane. Basic and acidic residues predominate over residues 320-329 (AEIPESKENG). Positions 320–348 (AEIPESKENGTEPESSFYKANGGFQPDEK) are disordered. Residue S335 is modified to Phosphoserine.

It belongs to the bile acid:sodium symporter (BASS) (TC 2.A.28) family. As to quaternary structure, monomer and homodimer. Mainly expressed in ileum and kidney, lower expression in cecum.

Its subcellular location is the membrane. The enzyme catalyses taurocholate(out) + 2 Na(+)(out) = taurocholate(in) + 2 Na(+)(in). It catalyses the reaction cholate(out) + 2 Na(+)(out) = cholate(in) + 2 Na(+)(in). The catalysed reaction is taurochenodeoxycholate(out) + 2 Na(+)(out) = taurochenodeoxycholate(in) + 2 Na(+)(in). It carries out the reaction tauroursodeoxycholate(out) + 2 Na(+)(out) = tauroursodeoxycholate(in) + 2 Na(+)(in). The enzyme catalyses glycocholate(out) + 2 Na(+)(out) = glycocholate(in) + 2 Na(+)(in). It catalyses the reaction tauronorcholate(out) + 2 Na(+)(out) = tauronorcholate(in) + 2 Na(+)(in). The catalysed reaction is tauroallocholate(out) + 2 Na(+)(out) = tauroallocholate(in) + 2 Na(+)(in). It carries out the reaction taurodeoxycholate(out) + 2 Na(+)(out) = taurodeoxycholate(in) + 2 Na(+)(in). The enzyme catalyses tauro-beta-muricholate(out) + 2 Na(+)(out) = tauro-beta-muricholate(in) + 2 Na(+)(in). Its function is as follows. Plays a critical role in the sodium-dependent reabsorption of bile acids from the lumen of the small intestine. Transports various bile acids, unconjugated or conjugated, such as cholate and taurocholate. Also responsible for bile acid transport in the renal proximal tubules, a salvage mechanism that helps conserve bile acids. Works collaboratively with the Na(+)-taurocholate cotransporting polypeptide (NTCP), the organic solute transporter (OST), and the bile salt export pump (BSEP), to ensure efficacious biological recycling of bile acids during enterohepatic circulation. The protein is Ileal sodium/bile acid cotransporter (SLC10A2) of Homo sapiens (Human).